A 327-amino-acid polypeptide reads, in one-letter code: DNA-directed RNA polymerase subunit alpha (327 aa).

An alpha N-terminal domain (alpha-NTD) region spans residues 1–231 (MIYQMQMPAK…DHVLLFADFS (231 aa)). Positions 247-327 (DEFETMRRLL…GMDITRYQMK (81 aa)) are alpha C-terminal domain (alpha-CTD).

The protein belongs to the RNA polymerase alpha chain family. As to quaternary structure, homodimer. The RNAP catalytic core consists of 2 alpha, 1 beta, 1 beta' and 1 omega subunit. When a sigma factor is associated with the core the holoenzyme is formed, which can initiate transcription.

It carries out the reaction RNA(n) + a ribonucleoside 5'-triphosphate = RNA(n+1) + diphosphate. DNA-dependent RNA polymerase catalyzes the transcription of DNA into RNA using the four ribonucleoside triphosphates as substrates. The polypeptide is DNA-directed RNA polymerase subunit alpha (Chlorobium chlorochromatii (strain CaD3)).